The sequence spans 427 residues: Enolase (427 aa).

Gln-164 is a binding site for (2R)-2-phosphoglycerate. Glu-206 (proton donor) is an active-site residue. The Mg(2+) site is built by Asp-243, Glu-284, and Asp-311. Residues Lys-336, Arg-365, Ser-366, and Lys-387 each coordinate (2R)-2-phosphoglycerate. The Proton acceptor role is filled by Lys-336.

It belongs to the enolase family. Mg(2+) is required as a cofactor.

Its subcellular location is the cytoplasm. It localises to the secreted. The protein localises to the cell surface. It carries out the reaction (2R)-2-phosphoglycerate = phosphoenolpyruvate + H2O. It participates in carbohydrate degradation; glycolysis; pyruvate from D-glyceraldehyde 3-phosphate: step 4/5. Catalyzes the reversible conversion of 2-phosphoglycerate (2-PG) into phosphoenolpyruvate (PEP). It is essential for the degradation of carbohydrates via glycolysis. The chain is Enolase from Synechococcus sp. (strain JA-2-3B'a(2-13)) (Cyanobacteria bacterium Yellowstone B-Prime).